A 357-amino-acid chain; its full sequence is Peptide chain release factor 1 (357 aa).

Q235 is subject to N5-methylglutamine. Basic and acidic residues predominate over residues 282–294; sequence RQKADTERSESRR. A disordered region spans residues 282-308; the sequence is RQKADTERSESRRSQVGSGDRSERIRT.

Belongs to the prokaryotic/mitochondrial release factor family. Post-translationally, methylated by PrmC. Methylation increases the termination efficiency of RF1.

The protein localises to the cytoplasm. Peptide chain release factor 1 directs the termination of translation in response to the peptide chain termination codons UAG and UAA. In Brucella anthropi (strain ATCC 49188 / DSM 6882 / CCUG 24695 / JCM 21032 / LMG 3331 / NBRC 15819 / NCTC 12168 / Alc 37) (Ochrobactrum anthropi), this protein is Peptide chain release factor 1.